A 298-amino-acid polypeptide reads, in one-letter code: Ankyrin repeat domain-containing protein 29 (298 aa).

ANK repeat units follow at residues 8-38 (PLAN…DVDC), 42-71 (YGTT…DINL), 75-104 (TGST…STEF), 108-137 (DGGT…NVHD), 141-170 (DGAT…KVNQ), 174-203 (DGTA…DRDA), 207-236 (DGST…SLGI), and 239-268 (NGST…DPAL).

The sequence is that of Ankyrin repeat domain-containing protein 29 (ankrd29) from Danio rerio (Zebrafish).